The primary structure comprises 287 residues: Cell division protein ZipA (287 aa).

Position 1 (Met-1) is a topological domain, periplasmic. Residues 2 to 22 form a helical membrane-spanning segment; it reads EIGLREWLIVIGIIVIAGILF. Topologically, residues 23–287 are cytoplasmic; sequence DGWRRMRGSK…ERRALTQRRG (265 aa). The disordered stretch occupies residues 48 to 140; it reads DEEETTSAEV…PTQRITEDKD (93 aa). Composition is skewed to basic and acidic residues over residues 64 to 77, 85 to 104, and 121 to 140; these read LDTH…EHDL, REGK…KDEP, and GRDD…EDKD.

The protein belongs to the ZipA family. In terms of assembly, interacts with FtsZ via their C-terminal domains.

The protein resides in the cell inner membrane. Essential cell division protein that stabilizes the FtsZ protofilaments by cross-linking them and that serves as a cytoplasmic membrane anchor for the Z ring. Also required for the recruitment to the septal ring of downstream cell division proteins. This is Cell division protein ZipA from Pseudomonas syringae pv. syringae (strain B728a).